The following is a 264-amino-acid chain: Endochitinase At2g43590 (264 aa).

A signal peptide spans 1-24 (MAFTKISLVLLLCLLGFFSETVKS). The Chitin-binding type-1 domain occupies 25–59 (QNCGCAPNLCCSQFGYCGTDDAYCGVGCRSGPCRG). 4 disulfide bridges follow: cysteine 27–cysteine 35, cysteine 29–cysteine 41, cysteine 34–cysteine 48, and cysteine 52–cysteine 57. The catalytic stretch occupies residues 66–264 (GSVGSIVTQG…GVDPGPNLSC (199 aa)). Glutamate 128 functions as the Proton donor in the catalytic mechanism. Residue asparagine 261 is glycosylated (N-linked (GlcNAc...) asparagine).

The protein belongs to the glycosyl hydrolase 19 family. Chitinase class I subfamily.

The catalysed reaction is Random endo-hydrolysis of N-acetyl-beta-D-glucosaminide (1-&gt;4)-beta-linkages in chitin and chitodextrins.. The chain is Endochitinase At2g43590 from Arabidopsis thaliana (Mouse-ear cress).